The chain runs to 366 residues: ABI gene family member 3 (366 aa).

Positions 33-61 form a coiled coil; that stretch reads CEDNYVQATDKRKALEETMAFTTQALASV. The segment at 161-195 is disordered; it reads SRTGTLSRKSIKAPATPASATLGRPPRIPEPVHLP. Phosphoserine is present on residues S213 and S216. Residues 215 to 302 are disordered; it reads GSAEGVGGAP…PPPGFGPDEP (88 aa). A compositionally biased stretch (pro residues) spans 232 to 248; sequence PPAPPLPSSLDPPPPPA. The 59-residue stretch at 308–366 folds into the SH3 domain; that stretch reads SYLEKVVTLYPYTSQKDNELSFSEGTVICVTRRYSDGWCEGVSSEGTGFFPGNYVEPSC. S342 is subject to Phosphoserine.

The protein belongs to the ABI family. As to quaternary structure, may interact with PAK1 and PAK2. Probably interacts with TARSH. As to expression, expressed in heart, lung, liver, pancreas, kidney, placenta and at low levels in brain and skeletal muscle.

The protein localises to the cytoplasm. May inhibit tumor metastasis. In vitro, reduces cell motility. This is ABI gene family member 3 (ABI3) from Homo sapiens (Human).